Consider the following 118-residue polypeptide: uncharacterized protein (118 aa).

The next 2 membrane-spanning stretches (helical) occupy residues 7–27 and 34–58; these read VIVK…FIIE and VFVA…AIIF.

The protein resides in the membrane. This is an uncharacterized protein from Saccharomyces cerevisiae (strain ATCC 204508 / S288c) (Baker's yeast).